We begin with the raw amino-acid sequence, 339 residues long: Glyoxylate reductase (339 aa).

Residues 157–160 (LGRI) and 239–241 (TAR) each bind NADP(+). Catalysis depends on residues arginine 241 and glutamate 270. Histidine 289 (proton donor) is an active-site residue. NADP(+) is bound at residue 289 to 291 (HIA).

This sequence belongs to the D-isomer specific 2-hydroxyacid dehydrogenase family. GyaR subfamily. In terms of assembly, homodimer.

The protein localises to the cytoplasm. It carries out the reaction glycolate + NAD(+) = glyoxylate + NADH + H(+). The protein is Glyoxylate reductase of Thermofilum pendens (strain DSM 2475 / Hrk 5).